The following is a 166-amino-acid chain: Deglycase PH1704 (166 aa).

Residues 1–166 (MKVLFLTANE…WMREFVKLLK (166 aa)) enclose the PfpI endopeptidase domain. Residue Cys-100 is the Nucleophile of the active site. The active site involves His-101.

Belongs to the peptidase C56 family. In terms of assembly, homohexamer formed by a dimer of trimers that assemble into a hollow ring structure.

Its subcellular location is the cytoplasm. The catalysed reaction is N(omega)-(1-hydroxy-2-oxopropyl)-L-arginyl-[protein] + H2O = lactate + L-arginyl-[protein] + H(+). The enzyme catalyses N(6)-(1-hydroxy-2-oxopropyl)-L-lysyl-[protein] + H2O = lactate + L-lysyl-[protein] + H(+). It catalyses the reaction S-(1-hydroxy-2-oxopropyl)-L-cysteinyl-[protein] + H2O = lactate + L-cysteinyl-[protein] + H(+). It carries out the reaction N(omega)-(1-hydroxy-2-oxoethyl)-L-arginyl-[protein] + H2O = L-arginyl-[protein] + glycolate + H(+). The catalysed reaction is N(6)-(1-hydroxy-2-oxoethyl)-L-lysyl-[protein] + H2O = glycolate + L-lysyl-[protein] + H(+). The enzyme catalyses S-(1-hydroxy-2-oxoethyl)-L-cysteinyl-[protein] + H2O = glycolate + L-cysteinyl-[protein] + H(+). Functionally, deglycase that catalyzes the deglycation of the Maillard adducts formed between amino groups of proteins and reactive carbonyl groups of glyoxals. Thus, functions as a protein deglycase that repairs methylglyoxal- and glyoxal-glycated proteins, and releases repaired proteins and lactate or glycolate, respectively. Deglycates cysteine, arginine and lysine residues in proteins, and thus reactivates these proteins by reversing glycation by glyoxals. Acts on early glycation intermediates (hemithioacetals and aminocarbinols), preventing the formation of advanced glycation endproducts (AGE) that cause irreversible damage. Also displays proteolytic activity. This Pyrococcus horikoshii (strain ATCC 700860 / DSM 12428 / JCM 9974 / NBRC 100139 / OT-3) protein is Deglycase PH1704.